A 207-amino-acid polypeptide reads, in one-letter code: Guanylate kinase (207 aa).

Residues 5-184 (GNLFIVSAPS…ALADLSAIIR (180 aa)) form the Guanylate kinase-like domain. Residue 12–19 (APSGAGKS) coordinates ATP. The interval 30-49 (PSDKQVSVSHTTRKPRPGEV) is disordered.

It belongs to the guanylate kinase family.

It is found in the cytoplasm. The enzyme catalyses GMP + ATP = GDP + ADP. In terms of biological role, essential for recycling GMP and indirectly, cGMP. The chain is Guanylate kinase from Shewanella frigidimarina (strain NCIMB 400).